A 376-amino-acid polypeptide reads, in one-letter code: Chaperone protein DnaJ (376 aa).

Residues 5–70 (DYYEVLGVKK…QKRAAYDQYG (66 aa)) form the J domain. Residues 131-209 (GVTKEIRIPT…CHGHGRVEKS (79 aa)) form a CR-type zinc finger. Residues cysteine 144, cysteine 147, cysteine 161, cysteine 164, cysteine 183, cysteine 186, cysteine 197, and cysteine 200 each coordinate Zn(2+). 4 CXXCXGXG motif repeats span residues 144 to 151 (CDVCHGSG), 161 to 168 (CSTCRGAG), 183 to 190 (CPTCHGSG), and 197 to 204 (CNKCHGHG).

The protein belongs to the DnaJ family. In terms of assembly, homodimer. Zn(2+) serves as cofactor.

It localises to the cytoplasm. Functionally, participates actively in the response to hyperosmotic and heat shock by preventing the aggregation of stress-denatured proteins and by disaggregating proteins, also in an autonomous, DnaK-independent fashion. Unfolded proteins bind initially to DnaJ; upon interaction with the DnaJ-bound protein, DnaK hydrolyzes its bound ATP, resulting in the formation of a stable complex. GrpE releases ADP from DnaK; ATP binding to DnaK triggers the release of the substrate protein, thus completing the reaction cycle. Several rounds of ATP-dependent interactions between DnaJ, DnaK and GrpE are required for fully efficient folding. Also involved, together with DnaK and GrpE, in the DNA replication of plasmids through activation of initiation proteins. This is Chaperone protein DnaJ from Yersinia enterocolitica serotype O:8 / biotype 1B (strain NCTC 13174 / 8081).